Here is a 648-residue protein sequence, read N- to C-terminus: DNA mismatch repair protein MutL (648 aa).

The interval 385–430 is disordered; sequence STVKGPAVNEPLTENTLNQQKVKTSASTPVVHTGNSVEPKPETSTA. A compositionally biased stretch (polar residues) spans 396–430; that stretch reads LTENTLNQQKVKTSASTPVVHTGNSVEPKPETSTA.

It belongs to the DNA mismatch repair MutL/HexB family.

Functionally, this protein is involved in the repair of mismatches in DNA. It is required for dam-dependent methyl-directed DNA mismatch repair. May act as a 'molecular matchmaker', a protein that promotes the formation of a stable complex between two or more DNA-binding proteins in an ATP-dependent manner without itself being part of a final effector complex. The protein is DNA mismatch repair protein MutL of Agathobacter rectalis (strain ATCC 33656 / DSM 3377 / JCM 17463 / KCTC 5835 / VPI 0990) (Eubacterium rectale).